The following is a 198-amino-acid chain: MKNKLIEKATELRNKGLTTGEIADELNISKDTTQWLIMQMTTVNKTKQKQKPDDFAINWKTIGSSSSRMQYIASALSDMAVEEGVVDAVVGISISGVPFATIMAEILDAELAVFHPIKHMKNESAQGALSHNFANIKNKTVVIVDDVITSGATITDAIRVCKKNGANPLVVTVLVDKKGLDDSDNVPIKSLIKINKVG.

It belongs to the purine/pyrimidine phosphoribosyltransferase family. GfcR subfamily.

The polypeptide is Transcriptional regulator GfcR (Methanosphaera stadtmanae (strain ATCC 43021 / DSM 3091 / JCM 11832 / MCB-3)).